Here is a 159-residue protein sequence, read N- to C-terminus: Transcription elongation factor GreA (159 aa).

Residues 43–75 adopt a coiled-coil conformation; the sequence is LSENAEYDAAREEQSQLEAKIGEIENKLASATI.

The protein belongs to the GreA/GreB family.

Functionally, necessary for efficient RNA polymerase transcription elongation past template-encoded arresting sites. The arresting sites in DNA have the property of trapping a certain fraction of elongating RNA polymerases that pass through, resulting in locked ternary complexes. Cleavage of the nascent transcript by cleavage factors such as GreA or GreB allows the resumption of elongation from the new 3'terminus. GreA releases sequences of 2 to 3 nucleotides. The polypeptide is Transcription elongation factor GreA (Chlorobaculum tepidum (strain ATCC 49652 / DSM 12025 / NBRC 103806 / TLS) (Chlorobium tepidum)).